Consider the following 422-residue polypeptide: Adenosylhomocysteinase (422 aa).

Positions 129 and 154 each coordinate substrate. 155 to 157 (TTT) serves as a coordination point for NAD(+). Positions 184 and 188 each coordinate substrate. NAD(+)-binding positions include N189, 218 to 223 (GYGWCG), E241, N276, 297 to 299 (AGH), and N344.

Belongs to the adenosylhomocysteinase family. NAD(+) is required as a cofactor.

The protein resides in the cytoplasm. It carries out the reaction S-adenosyl-L-homocysteine + H2O = L-homocysteine + adenosine. It functions in the pathway amino-acid biosynthesis; L-homocysteine biosynthesis; L-homocysteine from S-adenosyl-L-homocysteine: step 1/1. In terms of biological role, may play a key role in the regulation of the intracellular concentration of adenosylhomocysteine. The chain is Adenosylhomocysteinase from Pyrococcus abyssi (strain GE5 / Orsay).